A 343-amino-acid polypeptide reads, in one-letter code: Tetraacyldisaccharide 4'-kinase (343 aa).

Position 47 to 54 (47 to 54 (SVGGTGKT)) interacts with ATP.

Belongs to the LpxK family.

It carries out the reaction a lipid A disaccharide + ATP = a lipid IVA + ADP + H(+). It functions in the pathway glycolipid biosynthesis; lipid IV(A) biosynthesis; lipid IV(A) from (3R)-3-hydroxytetradecanoyl-[acyl-carrier-protein] and UDP-N-acetyl-alpha-D-glucosamine: step 6/6. Its function is as follows. Transfers the gamma-phosphate of ATP to the 4'-position of a tetraacyldisaccharide 1-phosphate intermediate (termed DS-1-P) to form tetraacyldisaccharide 1,4'-bis-phosphate (lipid IVA). This Flavobacterium psychrophilum (strain ATCC 49511 / DSM 21280 / CIP 103535 / JIP02/86) protein is Tetraacyldisaccharide 4'-kinase.